A 298-amino-acid polypeptide reads, in one-letter code: Release factor glutamine methyltransferase (298 aa).

Residues 131 to 135 (GTGTG), aspartate 162, tryptophan 189, and asparagine 205 contribute to the S-adenosyl-L-methionine site. Position 205–208 (205–208 (NPPY)) interacts with substrate.

The protein belongs to the protein N5-glutamine methyltransferase family. PrmC subfamily.

It carries out the reaction L-glutaminyl-[peptide chain release factor] + S-adenosyl-L-methionine = N(5)-methyl-L-glutaminyl-[peptide chain release factor] + S-adenosyl-L-homocysteine + H(+). Methylates the class 1 translation termination release factors RF1/PrfA and RF2/PrfB on the glutamine residue of the universally conserved GGQ motif. The polypeptide is Release factor glutamine methyltransferase (Pasteurella multocida (strain Pm70)).